A 445-amino-acid polypeptide reads, in one-letter code: MANRKYFGTDGVRGKVGAYPITPDFALKLGWAAGKVLASQGSKMVLIGKDTRISGYMLESALEAGLAAAGLSAAFTGPMPTPAIAYLTRTFRAEAGIVISASHNPYYDNGIKFFSAKGTKLPDEIEEAIEAMLEQPMDCVESAELGKASRINDAAGRYIEFCKGTFPAHLGLEGYKIVVDCANGATYHIAPNVLRELGAEVIEIGTDPNGLNINEKCGATDVTALQAKVVETKADVGLAYDGDGDRIMMVDHLGNKVDGDQILFIIAREALRSGQLKGGVVGTLMSNMSLEIALKMLGVPFLRANVGDRYVLEKMVENDWTLGGENSGHIIIADKNTTGDGIVASLAVLAAMAQHKLSLNELASAVKLFPQVLINVRFAGGENPLESDAVKSVAAEVEKRLEGKGRILLRKSGTEPLIRVMVECQDAELAQQCAEEIAEAVKKIN.

Residue Ser-102 is the Phosphoserine intermediate of the active site. Residues Ser-102, Asp-241, Asp-243, and Asp-245 each coordinate Mg(2+). Ser-102 is subject to Phosphoserine.

This sequence belongs to the phosphohexose mutase family. It depends on Mg(2+) as a cofactor. Activated by phosphorylation.

The catalysed reaction is alpha-D-glucosamine 1-phosphate = D-glucosamine 6-phosphate. Functionally, catalyzes the conversion of glucosamine-6-phosphate to glucosamine-1-phosphate. The chain is Phosphoglucosamine mutase from Haemophilus influenzae (strain ATCC 51907 / DSM 11121 / KW20 / Rd).